Here is a 556-residue protein sequence, read N- to C-terminus: Oxygen-dependent choline dehydrogenase (556 aa).

FAD is bound at residue 4–33 (DYIIIGAGSAGNVLATRLTEDPNTTVLLLE). Residue histidine 473 is the Proton acceptor of the active site.

The protein belongs to the GMC oxidoreductase family. It depends on FAD as a cofactor.

It catalyses the reaction choline + A = betaine aldehyde + AH2. The catalysed reaction is betaine aldehyde + NAD(+) + H2O = glycine betaine + NADH + 2 H(+). It functions in the pathway amine and polyamine biosynthesis; betaine biosynthesis via choline pathway; betaine aldehyde from choline (cytochrome c reductase route): step 1/1. Functionally, involved in the biosynthesis of the osmoprotectant glycine betaine. Catalyzes the oxidation of choline to betaine aldehyde and betaine aldehyde to glycine betaine at the same rate. This chain is Oxygen-dependent choline dehydrogenase, found in Escherichia coli O6:K15:H31 (strain 536 / UPEC).